A 405-amino-acid chain; its full sequence is MAGVLGMILAGGEGSRLRPLTESRSKPAVPFGGSYRLIDFALNNFVNADLMRIYVLTQFKSQSLFHHMKKGWNINGITDRFIDPIPAQMRTGKRWYEGTADAIYQNLRFMELSEPEQVCIFGSDHIYKMDIKQMLSFHKEKQAALTVSALRMPLAEASQFGVIEVDAEGRMVGFEEKPSAPKSIPGDPDFALVSMGNYIFEADVLFAELIEDADNENSSHDFGKDIIPKMFPRGDVFVYDFSQNRISGEKAEVYWRDVGTIDAYWQAHMDLLKTDAPFSLYNRKWPLHTYQPPLPPATFTDSDNGRVQIIDSLVCNGSYVRGSRIEKSVLGFRSNIASACDISESILLGDVKVGEGCVLRRVIVDKDVDIAPGTQIGVNLQEDKKVFHVSDDGIVVIPKGARVGY.

Residues Tyr96, Gly161, Glu176–Lys177, and Ser194 contribute to the alpha-D-glucose 1-phosphate site.

It belongs to the bacterial/plant glucose-1-phosphate adenylyltransferase family. Homotetramer.

It catalyses the reaction alpha-D-glucose 1-phosphate + ATP + H(+) = ADP-alpha-D-glucose + diphosphate. It participates in glycan biosynthesis; glycogen biosynthesis. Functionally, involved in the biosynthesis of ADP-glucose, a building block required for the elongation reactions to produce glycogen. Catalyzes the reaction between ATP and alpha-D-glucose 1-phosphate (G1P) to produce pyrophosphate and ADP-Glc. The protein is Glucose-1-phosphate adenylyltransferase 1 of Vibrio vulnificus (strain YJ016).